The sequence spans 172 residues: Translationally-controlled tumor protein homolog (172 aa).

Residues 1–172 enclose the TCTP domain; that stretch reads MIIFKDLLTG…FKHGLDEEKV (172 aa).

This sequence belongs to the TCTP family. As to expression, expressed by the venom gland.

The protein resides in the secreted. Its function is as follows. Venom protein that causes edema, enhances vascular permeability and is likely related to the inflammatory activity of the venom. In Loxosceles intermedia (Brown spider), this protein is Translationally-controlled tumor protein homolog.